Consider the following 676-residue polypeptide: Pentatricopeptide repeat-containing protein ATP4 homolog, chloroplastic (676 aa).

A chloroplast-targeting transit peptide spans 1–73 (MASPSSLLSW…NSPRAAGLAR (73 aa)). The interval 17–58 (LSFQPKNPSPSPATARVSVQDPPPPPSDANPSPGRSSNTSRY) is disordered. PPR repeat units lie at residues 148-182 (EVIL…GVQP), 183-217 (DNAT…GCSP), 218-252 (DMLT…KWQL), 253-287 (DPVI…GVKP), 288-322 (NLVV…EAVP), 323-353 (NKAT…MKDE), 358-388 (DVVL…MKAS), 396-430 (DSWS…GFKP), 431-465 (NIFI…GITP), and 532-566 (RMPY…GIYS). A Smr domain is found at 578-662 (LHLRGLSVGA…WFLTTSVAAR (85 aa)).

This sequence belongs to the PPR family. P subfamily.

The protein resides in the plastid. Its subcellular location is the chloroplast. In terms of biological role, involved in translation and accumulation of chloroplast ATP synthase subunits. This is Pentatricopeptide repeat-containing protein ATP4 homolog, chloroplastic from Oryza sativa subsp. japonica (Rice).